The following is a 260-amino-acid chain: Taurine import ATP-binding protein TauB (260 aa).

Residues 6–235 (AHQVSVVYAS…RYAAGESMRS (230 aa)) enclose the ABC transporter domain. 40 to 47 (GASGCGKS) is a binding site for ATP.

This sequence belongs to the ABC transporter superfamily. Taurine importer (TC 3.A.1.17.1) family. The complex is composed of two ATP-binding proteins (TauB), two transmembrane proteins (TauC) and a solute-binding protein (TauA).

The protein resides in the cell inner membrane. The catalysed reaction is taurine(out) + ATP + H2O = taurine(in) + ADP + phosphate + H(+). In terms of biological role, part of the ABC transporter complex TauABC involved in taurine import. Responsible for energy coupling to the transport system. In Burkholderia thailandensis (strain ATCC 700388 / DSM 13276 / CCUG 48851 / CIP 106301 / E264), this protein is Taurine import ATP-binding protein TauB.